A 610-amino-acid polypeptide reads, in one-letter code: Glutamine--fructose-6-phosphate aminotransferase [isomerizing] (610 aa).

The Nucleophile; for GATase activity role is filled by Cys2. The 217-residue stretch at 2-218 (CGIVGAVAQR…EGDVAEITRR (217 aa)) folds into the Glutamine amidotransferase type-2 domain. SIS domains lie at 286 to 426 (AADI…EQGR) and 459 to 600 (LATD…VDQP). Catalysis depends on Lys605, which acts as the For Fru-6P isomerization activity.

In terms of assembly, homodimer.

The protein resides in the cytoplasm. The catalysed reaction is D-fructose 6-phosphate + L-glutamine = D-glucosamine 6-phosphate + L-glutamate. Functionally, catalyzes the first step in hexosamine metabolism, converting fructose-6P into glucosamine-6P using glutamine as a nitrogen source. The sequence is that of Glutamine--fructose-6-phosphate aminotransferase [isomerizing] from Vibrio parahaemolyticus serotype O3:K6 (strain RIMD 2210633).